We begin with the raw amino-acid sequence, 171 residues long: Crossover junction endodeoxyribonuclease RuvC (171 aa).

Catalysis depends on residues Asp7, Glu67, and Asp139. Mg(2+) is bound by residues Asp7, Glu67, and Asp139.

It belongs to the RuvC family. Homodimer which binds Holliday junction (HJ) DNA. The HJ becomes 2-fold symmetrical on binding to RuvC with unstacked arms; it has a different conformation from HJ DNA in complex with RuvA. In the full resolvosome a probable DNA-RuvA(4)-RuvB(12)-RuvC(2) complex forms which resolves the HJ. Mg(2+) serves as cofactor.

The protein localises to the cytoplasm. It carries out the reaction Endonucleolytic cleavage at a junction such as a reciprocal single-stranded crossover between two homologous DNA duplexes (Holliday junction).. In terms of biological role, the RuvA-RuvB-RuvC complex processes Holliday junction (HJ) DNA during genetic recombination and DNA repair. Endonuclease that resolves HJ intermediates. Cleaves cruciform DNA by making single-stranded nicks across the HJ at symmetrical positions within the homologous arms, yielding a 5'-phosphate and a 3'-hydroxyl group; requires a central core of homology in the junction. The consensus cleavage sequence is 5'-(A/T)TT(C/G)-3'. Cleavage occurs on the 3'-side of the TT dinucleotide at the point of strand exchange. HJ branch migration catalyzed by RuvA-RuvB allows RuvC to scan DNA until it finds its consensus sequence, where it cleaves and resolves the cruciform DNA. The chain is Crossover junction endodeoxyribonuclease RuvC from Geotalea uraniireducens (strain Rf4) (Geobacter uraniireducens).